A 105-amino-acid polypeptide reads, in one-letter code: Large ribosomal subunit protein uL24 (105 aa).

This sequence belongs to the universal ribosomal protein uL24 family. In terms of assembly, part of the 50S ribosomal subunit.

One of two assembly initiator proteins, it binds directly to the 5'-end of the 23S rRNA, where it nucleates assembly of the 50S subunit. Functionally, one of the proteins that surrounds the polypeptide exit tunnel on the outside of the subunit. The polypeptide is Large ribosomal subunit protein uL24 (Vibrio vulnificus (strain YJ016)).